We begin with the raw amino-acid sequence, 24 residues long: Brevinin-1GRa (24 aa).

As to expression, expressed by the skin glands.

Its subcellular location is the secreted. Antimicrobial peptide active against the Gram-positive bacterium S.aureus (MIC=12.5 uM) and against the Gram-negative bacteria E.coli (MIC=25 uM). This Odorrana grahami (Yunnanfu frog) protein is Brevinin-1GRa.